Consider the following 205-residue polypeptide: Thiamine-phosphate synthase (205 aa).

4-amino-2-methyl-5-(diphosphooxymethyl)pyrimidine contacts are provided by residues 34–38 (QLRCK) and Asn-66. Mg(2+) contacts are provided by Asp-67 and Asp-86. Residue Ser-105 coordinates 4-amino-2-methyl-5-(diphosphooxymethyl)pyrimidine. Residue 131-133 (TTT) coordinates 2-[(2R,5Z)-2-carboxy-4-methylthiazol-5(2H)-ylidene]ethyl phosphate. Lys-134 serves as a coordination point for 4-amino-2-methyl-5-(diphosphooxymethyl)pyrimidine. 2-[(2R,5Z)-2-carboxy-4-methylthiazol-5(2H)-ylidene]ethyl phosphate is bound at residue Gly-163.

It belongs to the thiamine-phosphate synthase family. It depends on Mg(2+) as a cofactor.

The catalysed reaction is 2-[(2R,5Z)-2-carboxy-4-methylthiazol-5(2H)-ylidene]ethyl phosphate + 4-amino-2-methyl-5-(diphosphooxymethyl)pyrimidine + 2 H(+) = thiamine phosphate + CO2 + diphosphate. The enzyme catalyses 2-(2-carboxy-4-methylthiazol-5-yl)ethyl phosphate + 4-amino-2-methyl-5-(diphosphooxymethyl)pyrimidine + 2 H(+) = thiamine phosphate + CO2 + diphosphate. It catalyses the reaction 4-methyl-5-(2-phosphooxyethyl)-thiazole + 4-amino-2-methyl-5-(diphosphooxymethyl)pyrimidine + H(+) = thiamine phosphate + diphosphate. The protein operates within cofactor biosynthesis; thiamine diphosphate biosynthesis; thiamine phosphate from 4-amino-2-methyl-5-diphosphomethylpyrimidine and 4-methyl-5-(2-phosphoethyl)-thiazole: step 1/1. In terms of biological role, condenses 4-methyl-5-(beta-hydroxyethyl)thiazole monophosphate (THZ-P) and 2-methyl-4-amino-5-hydroxymethyl pyrimidine pyrophosphate (HMP-PP) to form thiamine monophosphate (TMP). The sequence is that of Thiamine-phosphate synthase from Neisseria meningitidis serogroup B (strain ATCC BAA-335 / MC58).